Here is a 352-residue protein sequence, read N- to C-terminus: Protein O-mannose kinase (352 aa).

Residues 1 to 16 (MERKPSVCRKSGSWNC) are Cytoplasmic-facing. A helical; Signal-anchor for type II membrane protein transmembrane segment spans residues 17-37 (LLVLFLLLLFTVVSVNFLLYM). Topologically, residues 38–352 (YIDQMYAPSR…MAVAETREML (315 aa)) are lumenal. Residues 82-352 (VRKLKLVGEG…MAVAETREML (271 aa)) form the Protein kinase domain.

It belongs to the protein kinase superfamily. Ser/Thr protein kinase family. STKL subfamily.

The protein resides in the endoplasmic reticulum membrane. The catalysed reaction is 3-O-[beta-D-GalNAc-(1-&gt;3)-beta-D-GlcNAc-(1-&gt;4)-alpha-D-Man]-L-Thr-[protein] + ATP = 3-O-[beta-D-GalNAc-(1-&gt;3)-beta-D-GlcNAc-(1-&gt;4)-(O-6-P-alpha-D-Man)]-Thr-[protein] + ADP + H(+). Its function is as follows. Protein O-mannose kinase that specifically mediates phosphorylation at the 6-position of an O-mannose of the trisaccharide (N-acetylgalactosamine (GalNAc)-beta-1,3-N-acetylglucosamine (GlcNAc)-beta-1,4-mannose) to generate phosphorylated O-mannosyl trisaccharide (N-acetylgalactosamine-beta-1,3-N-acetylglucosamine-beta-1,4-(phosphate-6-)mannose). Phosphorylated O-mannosyl trisaccharide is a carbohydrate structure present in alpha-dystroglycan (dag1), which is required for binding laminin G-like domain-containing extracellular proteins with high affinity. Only shows kinase activity when the GalNAc-beta-3-GlcNAc-beta-terminus is linked to the 4-position of O-mannose, suggesting that this disaccharide serves as the substrate recognition motif. The polypeptide is Protein O-mannose kinase (pomk) (Xenopus laevis (African clawed frog)).